A 292-amino-acid polypeptide reads, in one-letter code: 1D-myo-inositol 2-acetamido-2-deoxy-alpha-D-glucopyranoside deacetylase (292 aa).

Zn(2+) contacts are provided by His-11, Asp-14, and His-146.

It belongs to the MshB deacetylase family. It depends on Zn(2+) as a cofactor.

It catalyses the reaction 1D-myo-inositol 2-acetamido-2-deoxy-alpha-D-glucopyranoside + H2O = 1D-myo-inositol 2-amino-2-deoxy-alpha-D-glucopyranoside + acetate. Its function is as follows. Catalyzes the deacetylation of 1D-myo-inositol 2-acetamido-2-deoxy-alpha-D-glucopyranoside (GlcNAc-Ins) in the mycothiol biosynthesis pathway. The protein is 1D-myo-inositol 2-acetamido-2-deoxy-alpha-D-glucopyranoside deacetylase of Acidothermus cellulolyticus (strain ATCC 43068 / DSM 8971 / 11B).